The sequence spans 297 residues: Pyrroline-5-carboxylate reductase 1 (297 aa).

This sequence belongs to the pyrroline-5-carboxylate reductase family.

It is found in the cytoplasm. The catalysed reaction is L-proline + NADP(+) = (S)-1-pyrroline-5-carboxylate + NADPH + 2 H(+). It catalyses the reaction L-proline + NAD(+) = (S)-1-pyrroline-5-carboxylate + NADH + 2 H(+). The protein operates within amino-acid biosynthesis; L-proline biosynthesis; L-proline from L-glutamate 5-semialdehyde: step 1/1. In terms of biological role, catalyzes the reduction of 1-pyrroline-5-carboxylate (PCA) to L-proline. The polypeptide is Pyrroline-5-carboxylate reductase 1 (proH) (Bacillus subtilis (strain 168)).